The sequence spans 183 residues: Dual-action ribosomal maturation protein DarP (183 aa).

Belongs to the DarP family.

It localises to the cytoplasm. Member of a network of 50S ribosomal subunit biogenesis factors which assembles along the 30S-50S interface, preventing incorrect 23S rRNA structures from forming. Promotes peptidyl transferase center (PTC) maturation. This is Dual-action ribosomal maturation protein DarP from Salmonella gallinarum (strain 287/91 / NCTC 13346).